Consider the following 82-residue polypeptide: Beta-defensin 113 (82 aa).

A signal peptide spans 1-16 (MKILCIFLTFFFTVSC). Cystine bridges form between cysteine 35–cysteine 61, cysteine 42–cysteine 56, and cysteine 46–cysteine 62.

Belongs to the beta-defensin family.

Its subcellular location is the secreted. In terms of biological role, has antibacterial activity. The chain is Beta-defensin 113 (DEFB113) from Pan troglodytes (Chimpanzee).